The following is a 173-amino-acid chain: Photosystem I assembly protein Ycf3 (173 aa).

3 TPR repeats span residues 35–68, 72–105, and 120–153; these read AYLYYRKGLAAQNDGDYSEALEYYEESLKLEDNQ, GETLKNMAIIYMSNGDEERAINTYKKALGQNPKQ, and GRMAQRNGNQDECDIWFDQAAEVWSKAVRLYPGG.

It belongs to the Ycf3 family.

The protein localises to the cellular thylakoid membrane. Essential for the assembly of the photosystem I (PSI) complex. May act as a chaperone-like factor to guide the assembly of the PSI subunits. This Prochlorococcus marinus (strain NATL2A) protein is Photosystem I assembly protein Ycf3.